The sequence spans 86 residues: Progonadoliberin IIA (86 aa).

Positions 1–24 (MVHICRLFVVMGMLLCLSAQFASS) are cleaved as a signal peptide. Residue Gln25 is modified to Pyrrolidone carboxylic acid. Position 34 is a glycine amide (Gly34).

Belongs to the GnRH family. Olfactory bulbs, hypothalamus and telencephalon, midbrain and posterior brain areas.

The protein localises to the secreted. Functionally, stimulates the secretion of gonadotropins. The chain is Progonadoliberin IIA (gnrh2a) from Carassius auratus (Goldfish).